We begin with the raw amino-acid sequence, 305 residues long: N-acyl-aromatic-L-amino acid amidohydrolase (carboxylate-forming) (305 aa).

The Zn(2+) site is built by H15 and E18. Substrate is bound by residues R57 and 64 to 65; that span reads NR. Position 108 (H108) interacts with Zn(2+). The substrate site is built by E171 and Y281.

The protein belongs to the AspA/AstE family. Aspartoacylase subfamily. In terms of assembly, homotetramer. Zn(2+) is required as a cofactor.

It localises to the apical cell membrane. It is found in the cytoplasm. The enzyme catalyses an N-acyl-aromatic L-alpha-amino acid + H2O = an aromatic L-alpha-amino acid + a carboxylate. It carries out the reaction an N-acetyl-L-cysteine-S-conjugate + H2O = an S-substituted L-cysteine + acetate. Functionally, plays an important role in deacetylating mercapturic acids in kidney proximal tubules. This Xenopus laevis (African clawed frog) protein is N-acyl-aromatic-L-amino acid amidohydrolase (carboxylate-forming) (acy3).